The primary structure comprises 174 residues: Protein-export protein SecB (174 aa).

It belongs to the SecB family. Homotetramer, a dimer of dimers. One homotetramer interacts with 1 SecA dimer.

The protein localises to the cytoplasm. Its function is as follows. One of the proteins required for the normal export of preproteins out of the cell cytoplasm. It is a molecular chaperone that binds to a subset of precursor proteins, maintaining them in a translocation-competent state. It also specifically binds to its receptor SecA. The protein is Protein-export protein SecB of Ehrlichia ruminantium (strain Gardel).